The primary structure comprises 446 residues: ATP-dependent protease ATPase subunit HslU (446 aa).

ATP contacts are provided by residues V18, 60-65 (GVGKTE), D259, E324, and R396.

The protein belongs to the ClpX chaperone family. HslU subfamily. As to quaternary structure, a double ring-shaped homohexamer of HslV is capped on each side by a ring-shaped HslU homohexamer. The assembly of the HslU/HslV complex is dependent on binding of ATP.

It localises to the cytoplasm. Its function is as follows. ATPase subunit of a proteasome-like degradation complex; this subunit has chaperone activity. The binding of ATP and its subsequent hydrolysis by HslU are essential for unfolding of protein substrates subsequently hydrolyzed by HslV. HslU recognizes the N-terminal part of its protein substrates and unfolds these before they are guided to HslV for hydrolysis. This is ATP-dependent protease ATPase subunit HslU from Acidovorax sp. (strain JS42).